Here is a 138-residue protein sequence, read N- to C-terminus: Putative protein encoded by LINC02912 (138 aa).

2 helical membrane-spanning segments follow: residues 32–52 (FALS…CLIC) and 65–85 (CLIN…TISQ). A disordered region spans residues 109-138 (SGGQSQHSWPCPERSKNLPQVSKQLRNRAG).

It is found in the membrane. The sequence is that of Putative protein encoded by LINC02912 from Homo sapiens (Human).